Here is a 260-residue protein sequence, read N- to C-terminus: Large ribosomal subunit protein uL2y (260 aa).

Residues Arg-227–Arg-248 are disordered.

This sequence belongs to the universal ribosomal protein uL2 family.

The polypeptide is Large ribosomal subunit protein uL2y (RPL8B) (Arabidopsis thaliana (Mouse-ear cress)).